Reading from the N-terminus, the 365-residue chain is Serine/threonine-protein phosphatase 2A activator 1 (365 aa).

Positions 321 to 349 are disordered; that stretch reads YEAPSETSEKPAAGTAHTTTTTMPPPRMT. A compositionally biased stretch (low complexity) spans 331 to 342; it reads PAAGTAHTTTTT.

The protein belongs to the PTPA-type PPIase family.

It localises to the cytoplasm. The protein localises to the nucleus. It carries out the reaction [protein]-peptidylproline (omega=180) = [protein]-peptidylproline (omega=0). Its function is as follows. PPIases accelerate the folding of proteins. It catalyzes the cis-trans isomerization of proline imidic peptide bonds in oligopeptides. Acts as a regulatory subunit for PP2A-like phosphatases modulating their activity or substrate specificity, probably by inducing a conformational change in the catalytic subunit, a direct target of the PPIase. Can reactivate inactive phosphatase PP2A-phosphatase methylesterase complexes (PP2Ai) in presence of ATP and Mg(2+) by dissociating the inactive form from the complex. The sequence is that of Serine/threonine-protein phosphatase 2A activator 1 (RRD1) from Eremothecium gossypii (strain ATCC 10895 / CBS 109.51 / FGSC 9923 / NRRL Y-1056) (Yeast).